Here is a 192-residue protein sequence, read N- to C-terminus: Inosine triphosphate pyrophosphatase (192 aa).

8-13 (TTNLKK) serves as a coordination point for ITP. A Mg(2+)-binding site is contributed by Glu-34. ITP contacts are provided by residues Lys-46, 64–65 (DT), Lys-81, 141–144 (EGFD), Lys-164, and 169–170 (HR).

This sequence belongs to the HAM1 NTPase family. In terms of assembly, homodimer. Requires Mg(2+) as cofactor. The cofactor is Mn(2+).

It localises to the cytoplasm. The protein localises to the nucleus. It catalyses the reaction ITP + H2O = IMP + diphosphate + H(+). It carries out the reaction dITP + H2O = dIMP + diphosphate + H(+). The catalysed reaction is XTP + H2O = XMP + diphosphate + H(+). Pyrophosphatase that hydrolyzes non-canonical purine nucleotides such as inosine triphosphate (ITP), deoxyinosine triphosphate (dITP) or xanthosine 5'-triphosphate (XTP) to their respective monophosphate derivatives. The enzyme does not distinguish between the deoxy- and ribose forms. Probably excludes non-canonical purines from RNA and DNA precursor pools, thus preventing their incorporation into RNA and DNA and avoiding chromosomal lesions. This Encephalitozoon cuniculi (strain GB-M1) (Microsporidian parasite) protein is Inosine triphosphate pyrophosphatase.